A 633-amino-acid polypeptide reads, in one-letter code: NADPH-dependent diflavin oxidoreductase 1 (633 aa).

The Flavodoxin-like domain maps to 5-149 (CTIIYATESG…EVEKWSQELI (145 aa)). Residues 11-16 (TESGTS), 58-61 (STTG), and Asp131 each bind FMN. Residues 196–442 (TQFYKSKLKV…FIKESGARLP (247 aa)) enclose the FAD-binding FR-type domain. FAD is bound by residues 377–380 (RPFS) and 412–415 (GLCS). NADP(+) is bound by residues Thr456, 520–521 (SR), 528–532 (KVYVQ), and Asp565. The disordered stretch occupies residues 580 to 610 (KNNNNNNNNNNNNNNNNNNNNNNNNNDDENN). Residues 581-604 (NNNNNNNNNNNNNNNNNNNNNNNN) show a composition bias toward low complexity. Residue Trp633 coordinates FAD.

Belongs to the NADPH-dependent diflavin oxidoreductase NDOR1 family. The protein in the N-terminal section; belongs to the flavodoxin family. This sequence in the C-terminal section; belongs to the flavoprotein pyridine nucleotide cytochrome reductase family. The cofactor is FAD. FMN serves as cofactor.

The protein resides in the cytoplasm. It carries out the reaction 2 oxidized [2Fe-2S]-[protein] + NADPH = 2 reduced [2Fe-2S]-[protein] + NADP(+) + H(+). NADPH-dependent reductase which is a central component of the cytosolic iron-sulfur (Fe-S) protein assembly (CIA) machinery. Transfers electrons from NADPH via its FAD and FMN prosthetic groups to the [2Fe-2S] cluster of the anamorsin/DRE2 homolog, another key component of the CIA machinery. In turn, this reduced cluster provides electrons for assembly of cytosolic iron-sulfur cluster proteins. This chain is NADPH-dependent diflavin oxidoreductase 1 (redC), found in Dictyostelium discoideum (Social amoeba).